Reading from the N-terminus, the 337-residue chain is Na(+)/H(+) exchange regulatory cofactor NHE-RF2 (337 aa).

One can recognise a PDZ 1 domain in the interval 11–91; sequence LCRLVRGEQG…QTQLLVVDKE (81 aa). The tract at residues 112–145 is disordered; that stretch reads LPPAHNPWEPKPDWACSGSLGSDTGQKDVNGPPR. 7 positions are modified to phosphoserine: S130, S183, S186, S254, S269, S280, and S303. The PDZ 2 domain maps to 151-231; it reads LCHLRRGPQG…EARLLVVDPE (81 aa). A disordered region spans residues 242–337; sequence VPTEEHVEGP…NRKREIFSNF (96 aa). Over residues 255 to 275 the composition is skewed to polar residues; it reads PVTNGTSPAQLNGGSVCSSRS. Residues 327–337 are compositionally biased toward basic and acidic residues; it reads WNRKREIFSNF.

In terms of assembly, homodimer, and heterodimer with NHERF1. Binds PDZK1. Interacts with SRY. Binds ADRB2, SLC9A3, P2RY1, P2YR2, RDX and LPAR2. Interacts with MCC. Found in a complex with EZR, PODXL and NHERF2. Interacts (via the PDZ domains) with PODXL (via the C-terminal PDZ-binding motif DTHL); interaction is detected in glomerular epithelium cells. Interacts with SGK1 and KCNJ1/ROMK1. Interacts (via the PDZ domains) with SLC26A6.

The protein localises to the endomembrane system. The protein resides in the nucleus. It localises to the apical cell membrane. Its function is as follows. Scaffold protein that connects plasma membrane proteins with members of the ezrin/moesin/radixin family and thereby helps to link them to the actin cytoskeleton and to regulate their surface expression. Necessary for cAMP-mediated phosphorylation and inhibition of SLC9A3. May also act as scaffold protein in the nucleus. The protein is Na(+)/H(+) exchange regulatory cofactor NHE-RF2 (Nherf2) of Mus musculus (Mouse).